The chain runs to 107 residues: Replication initiation control protein YabA (107 aa).

Zn(2+) is bound by residues His81, Cys83, Cys97, and Cys100.

It belongs to the YabA family. Homotetramer. Interacts with both DnaA and DnaN, acting as a bridge between these two proteins. Requires Zn(2+) as cofactor.

The protein resides in the cytoplasm. Its subcellular location is the nucleoid. Functionally, involved in control of chromosome replication initiation. Inhibits the cooperative binding of DnaA to the oriC region, thus negatively regulating initiation of chromosome replication. Inhibits the ability of DnaA-ATP to form a helix on DNA; does not disassemble preformed DnaA-DNA helices. Decreases the residence time of DnaA on the chromosome at its binding sites (oriC, replication forks and promoter-binding sites). Tethers DnaA to the replication machinery via the DNA polymerase beta sliding clamp subunit (dnaN). Associates with oriC and other DnaA targets on the chromosome in a DnaA-dependent manner. This chain is Replication initiation control protein YabA, found in Streptococcus equi subsp. zooepidemicus (strain MGCS10565).